Here is a 317-residue protein sequence, read N- to C-terminus: MQNKIKVVFCGTPKIGADVLKALIEMNQVEIVLVISQPDKPIGRKKQIVHTPVKKLALENNLKVVQPNKIGEIYDDLAKLEFDFLITCAFGQFIPTKILKLAKIDSINFHGSLLPKLRGGAPIQYAIKNGDKKTGITIMQMVKQMDAGDYYVQESIDILDSDDSGSLFEKMGHLAYSMCKKYLVDIYNHKFELIKQNEDEVTFCKNISSEEEKINWNNTSLDIFNLIRSLSPSPISYTTINNQRYKIKSSKVIDLDNQNKNAIPGTILGINKQGIVVKTLDKALLILEIQKEGKKMILASNYYLNKLSDLKINDKFD.

Residue 112 to 115 participates in (6S)-5,6,7,8-tetrahydrofolate binding; it reads SLLP.

Belongs to the Fmt family.

The catalysed reaction is L-methionyl-tRNA(fMet) + (6R)-10-formyltetrahydrofolate = N-formyl-L-methionyl-tRNA(fMet) + (6S)-5,6,7,8-tetrahydrofolate + H(+). In terms of biological role, attaches a formyl group to the free amino group of methionyl-tRNA(fMet). The formyl group appears to play a dual role in the initiator identity of N-formylmethionyl-tRNA by promoting its recognition by IF2 and preventing the misappropriation of this tRNA by the elongation apparatus. The polypeptide is Methionyl-tRNA formyltransferase (Mycoplasma mycoides subsp. mycoides SC (strain CCUG 32753 / NCTC 10114 / PG1)).